We begin with the raw amino-acid sequence, 443 residues long: Methyl-coenzyme M reductase I subunit beta (443 aa).

Residue Y367 coordinates coenzyme M. G369 serves as a coordination point for coenzyme B.

Belongs to the methyl-coenzyme M reductase beta subunit family. In terms of assembly, MCR is a hexamer of two alpha, two beta, and two gamma chains, forming a dimer of heterotrimers. Coenzyme F430 serves as cofactor.

The protein resides in the cytoplasm. The catalysed reaction is coenzyme B + methyl-coenzyme M = methane + coenzyme M-coenzyme B heterodisulfide. It functions in the pathway one-carbon metabolism; methyl-coenzyme M reduction; methane from methyl-coenzyme M: step 1/1. Methyl-coenzyme M reductase activity is inhibited by 3-nitrooxypropanol (3-NOP) in vitro and in vivo, by oxidation of its active site Ni(I), which stops both growth and methanogenesis. Is also inhibited by the reaction product CoM-S-S-CoB. Its function is as follows. Component of the methyl-coenzyme M reductase (MCR) I that catalyzes the reductive cleavage of methyl-coenzyme M (CoM-S-CH3 or 2-(methylthio)ethanesulfonate) using coenzyme B (CoB or 7-mercaptoheptanoylthreonine phosphate) as reductant which results in the production of methane and the mixed heterodisulfide of CoB and CoM (CoM-S-S-CoB). This is the final step in methanogenesis. Neither N-6-mercaptohexanoylthreonine phosphate (H-S-HxoTP) nor N-8-mercaptooctanoylthreonine phosphate (H-SOcoTP) nor any other thiol compound such as CoA or CoM can substitute for CoB as the electron donor. In Methanothermobacter marburgensis (strain ATCC BAA-927 / DSM 2133 / JCM 14651 / NBRC 100331 / OCM 82 / Marburg) (Methanobacterium thermoautotrophicum), this protein is Methyl-coenzyme M reductase I subunit beta (mcrB).